Consider the following 791-residue polypeptide: uncharacterized protein (791 aa).

The chain crosses the membrane as a helical span at residues 10-30 (LLTITIGAVAVSSILLGGIFY). The segment covering 56 to 76 (NLDYQKARPSIKDNNLKEIPK) has biased composition (basic and acidic residues). The disordered stretch occupies residues 56 to 175 (NLDYQKARPS…PQPQQIPNQS (120 aa)). A compositionally biased stretch (pro residues) spans 77–97 (PKPQPKPEPQPTPFPDPIPTP). Residues 98–124 (PKKEELKKPEIKPEEPKKPEIKPEPIP) show a composition bias toward basic and acidic residues. The segment covering 125–139 (KPKPQPIPQPTPPVE) has biased composition (pro residues).

It to U.parvum UU044.

It is found in the membrane. This is an uncharacterized protein from Ureaplasma parvum serovar 3 (strain ATCC 700970).